A 236-amino-acid polypeptide reads, in one-letter code: Small ribosomal subunit protein uS2c (236 aa).

Belongs to the universal ribosomal protein uS2 family.

The protein localises to the plastid. The protein resides in the chloroplast. The chain is Small ribosomal subunit protein uS2c (rps2) from Lotus japonicus (Lotus corniculatus var. japonicus).